A 178-amino-acid chain; its full sequence is Mediator of RNA polymerase II transcription subunit 28 (178 aa).

The interval 1–25 is disordered; that stretch reads MAAPLGGMFSGQQPGPPQPPPGLLG. Positions 109–145 form a coiled coil; that stretch reads QVIKEDVSELRNELQRKDALVQKHLTKLRHWQQVLED.

This sequence belongs to the Mediator complex subunit 28 family. As to quaternary structure, component of the Mediator complex, which is composed of MED1, MED4, MED6, MED7, MED8, MED9, MED10, MED11, MED12, MED13, MED13L, MED14, MED15, MED16, MED17, MED18, MED19, MED20, MED21, MED22, MED23, MED24, MED25, MED26, MED27, MED29, MED30, MED31, CCNC, CDK8 and CDC2L6/CDK11. The MED12, MED13, CCNC and CDK8 subunits form a distinct module termed the CDK8 module. Mediator containing the CDK8 module is less active than Mediator lacking this module in supporting transcriptional activation. Individual preparations of the Mediator complex lacking one or more distinct subunits have been variously termed ARC, CRSP, DRIP, PC2, SMCC and TRAP. Forms a ternary complex with NF2/merlin and GRB2. Binds to actin.

It localises to the nucleus. The protein localises to the cytoplasm. It is found in the membrane. Its function is as follows. Component of the Mediator complex, a coactivator involved in the regulated transcription of nearly all RNA polymerase II-dependent genes. Mediator functions as a bridge to convey information from gene-specific regulatory proteins to the basal RNA polymerase II transcription machinery. Mediator is recruited to promoters by direct interactions with regulatory proteins and serves as a scaffold for the assembly of a functional preinitiation complex with RNA polymerase II and the general transcription factors. May be part of a complex containing NF2/merlin that participates in cellular signaling to the actin cytoskeleton downstream of tyrosine kinase signaling pathways. In Bos taurus (Bovine), this protein is Mediator of RNA polymerase II transcription subunit 28 (MED28).